The chain runs to 380 residues: 5-amino-6-(D-ribitylamino)uracil--L-tyrosine 4-hydroxyphenyl transferase (380 aa).

The region spanning 56-303 (VTYIINRNIN…GAVARIYLGN (248 aa)) is the Radical SAM core domain. [4Fe-4S] cluster-binding residues include Cys-70, Cys-74, and Cys-77.

Belongs to the radical SAM superfamily. CofH family. In terms of assembly, consists of two subunits, CofG and CofH. It depends on [4Fe-4S] cluster as a cofactor.

The catalysed reaction is 5-amino-6-(D-ribitylamino)uracil + L-tyrosine + S-adenosyl-L-methionine = 5-amino-5-(4-hydroxybenzyl)-6-(D-ribitylimino)-5,6-dihydrouracil + 2-iminoacetate + 5'-deoxyadenosine + L-methionine + H(+). It participates in cofactor biosynthesis; coenzyme F0 biosynthesis. In terms of biological role, catalyzes the radical-mediated synthesis of 5-amino-5-(4-hydroxybenzyl)-6-(D-ribitylimino)-5,6-dihydrouracil from 5-amino-6-(D-ribitylamino)uracil and L-tyrosine. The sequence is that of 5-amino-6-(D-ribitylamino)uracil--L-tyrosine 4-hydroxyphenyl transferase from Nostoc punctiforme (strain ATCC 29133 / PCC 73102).